The sequence spans 343 residues: 3-keto-steroid reductase (343 aa).

NADP(+)-binding residues include Leu19 and Thr42. Residues Ser180 and Tyr203 each act as proton donor in the active site. NADP(+) contacts are provided by Tyr203, Lys207, and Ser239. Lys207 serves as the catalytic Lowers pKa of active site Tyr.

Belongs to the short-chain dehydrogenases/reductases (SDR) family. ERG27 subfamily.

The enzyme catalyses a 3beta-hydroxysteroid + NADP(+) = a 3-oxosteroid + NADPH + H(+). Its pathway is steroid biosynthesis; zymosterol biosynthesis; zymosterol from lanosterol: step 5/6. In terms of biological role, responsible for the reduction of the keto group on the C-3 of sterols. The polypeptide is 3-keto-steroid reductase (ERG27) (Yarrowia lipolytica (strain CLIB 122 / E 150) (Yeast)).